Reading from the N-terminus, the 1019-residue chain is StAR-related lipid transfer protein 8 (1019 aa).

Disordered regions lie at residues 92-122 and 134-154; these read QPLL…KVKK and SLRR…CLAT. Over residues 100–115 the composition is skewed to polar residues; sequence SPSNQPFLSPPQGQEG. The residue at position 108 (serine 108) is a Phosphoserine. Basic and acidic residues predominate over residues 134 to 147; sequence SLRRKEKGDSRQTE. Residue arginine 168 is modified to Asymmetric dimethylarginine. Phosphoserine occurs at positions 234 and 237. 2 disordered regions span residues 325 to 355 and 406 to 482; these read MYPD…EVAT and APAQ…VGAS. Residues 334-347 are compositionally biased toward acidic residues; sequence KEEEEEEEEEEEEA. Polar residues-rich tracts occupy residues 418–430 and 437–455; these read NSTA…SSLS and ISDT…NSMN. Phosphoserine occurs at positions 494 and 502. The Rho-GAP domain occupies 569 to 773; the sequence is PPLIHVQRTG…HMISDCKKLF (205 aa). The segment at 731-754 is disordered; sequence DSSSPRIKSKRSLVGRPGPRDLSE. The 209-residue stretch at 805-1013 folds into the START domain; the sequence is AQAAGVSLSL…RDSFPTLQAA (209 aa).

In terms of assembly, binds both the SH2 and PTB domains of TNS1.

It is found in the cell junction. The protein localises to the focal adhesion. In terms of biological role, accelerates GTPase activity of RHOA and CDC42, but not RAC1. Stimulates the hydrolysis of phosphatidylinositol 4,5-bisphosphate by PLCD1. This Mus musculus (Mouse) protein is StAR-related lipid transfer protein 8 (Stard8).